The chain runs to 75 residues: Veswaprin-c (75 aa).

The first 24 residues, 1-24 (MSSGGLLLLLGLLTLWAELTPVSS), serve as a signal peptide directing secretion. The WAP domain occupies 27–72 (RPKKPGLCPPRPQKPPCVRECKNDWRCPGERKCCRYGCIYECRDPI). Intrachain disulfides connect cysteine 34–cysteine 60, cysteine 43–cysteine 64, cysteine 47–cysteine 59, and cysteine 53–cysteine 68.

Belongs to the venom waprin family. Expressed by the venom gland.

It localises to the secreted. Functionally, damages membranes of susceptible bacteria. Has no hemolytic activity. Not toxic to mice. Does not inhibit the proteinases elastase and cathepsin G. The chain is Veswaprin-c from Demansia vestigiata (Lesser black whip snake).